The chain runs to 377 residues: Chaperone protein DnaJ (377 aa).

In terms of domain architecture, J spans 5–70 (DYYEILGVSK…QKRAAYDQYG (66 aa)). The CR-type zinc finger occupies 132–210 (GVTKEIRIPT…CHGHGRVEKT (79 aa)). The Zn(2+) site is built by C145, C148, C162, C165, C184, C187, C198, and C201. 4 CXXCXGXG motif repeats span residues 145–152 (CDVCHGSG), 162–169 (CPTCHGAG), 184–191 (CPHCQGRG), and 198–205 (CNKCHGHG).

This sequence belongs to the DnaJ family. In terms of assembly, homodimer. Zn(2+) serves as cofactor.

The protein localises to the cytoplasm. Participates actively in the response to hyperosmotic and heat shock by preventing the aggregation of stress-denatured proteins and by disaggregating proteins, also in an autonomous, DnaK-independent fashion. Unfolded proteins bind initially to DnaJ; upon interaction with the DnaJ-bound protein, DnaK hydrolyzes its bound ATP, resulting in the formation of a stable complex. GrpE releases ADP from DnaK; ATP binding to DnaK triggers the release of the substrate protein, thus completing the reaction cycle. Several rounds of ATP-dependent interactions between DnaJ, DnaK and GrpE are required for fully efficient folding. Also involved, together with DnaK and GrpE, in the DNA replication of plasmids through activation of initiation proteins. This chain is Chaperone protein DnaJ, found in Klebsiella pneumoniae (strain 342).